The sequence spans 310 residues: Ribosomal RNA small subunit methyltransferase H (310 aa).

Residues 32–34, Asp52, Phe79, Asp100, and Gln107 contribute to the S-adenosyl-L-methionine site; that span reads GGH.

This sequence belongs to the methyltransferase superfamily. RsmH family.

The protein resides in the cytoplasm. It carries out the reaction cytidine(1402) in 16S rRNA + S-adenosyl-L-methionine = N(4)-methylcytidine(1402) in 16S rRNA + S-adenosyl-L-homocysteine + H(+). Specifically methylates the N4 position of cytidine in position 1402 (C1402) of 16S rRNA. In Bacillus thuringiensis subsp. konkukian (strain 97-27), this protein is Ribosomal RNA small subunit methyltransferase H.